Here is a 1172-residue protein sequence, read N- to C-terminus: Carbamoyl phosphate synthase arginine-specific large chain, chloroplastic (1172 aa).

Positions 1–10 (MATSLSSAPT) are enriched in polar residues. Residues 1–37 (MATSLSSAPTQLRPSPSPSHHRLLHRSSLLPFPRRHH) form a disordered region. Residues 1–50 (MATSLSSAPTQLRPSPSPSHHRLLHRSSLLPFPRRHHHRRRRCGALSIAR) constitute a chloroplast transit peptide. The interval 72-473 (GRLAGVRKIM…SFQKAVRSLE (402 aa)) is carboxyphosphate synthetic domain. ATP is bound by residues R199, R240, G246, G247, K279, L281, E286, G312, V313, H314, Q356, and E370. An ATP-grasp 1 domain is found at 203–399 (KQAMDRIGLK…IAKMAAKLSV (197 aa)). Mg(2+) contacts are provided by Q356, E370, and N372. An oligomerization domain region spans residues 474–623 (TGFAGWGCAP…YSSYEYECES (150 aa)). Residues 624–1019 (VPTNKKKVLI…GAFAKAQIAA (396 aa)) form a carbamoyl phosphate synthetic domain region. Positions 761 to 954 (NAILEELGIE…LAKYASLVMS (194 aa)) constitute an ATP-grasp 2 domain. Residues R797, K836, L838, E843, G869, I870, H871, S872, Q912, and E925 each contribute to the ATP site. Residues Q912, E925, and N927 each contribute to the Mg(2+) site. An allosteric domain region spans residues 1020 to 1172 (GQKLPLNGTV…QNLQAAQSAS (153 aa)). The region spanning 1021-1162 (QKLPLNGTVF…QDYFQTTDAS (142 aa)) is the MGS-like domain.

It belongs to the CarB family. In terms of assembly, heterodimer composed of 2 chains; the small (or glutamine) chain promotes the hydrolysis of glutamine to ammonia, which is used by the large (or ammonia) chain to synthesize carbamoyl phosphate. Mg(2+) is required as a cofactor. It depends on Mn(2+) as a cofactor.

The protein resides in the plastid. Its subcellular location is the chloroplast. It catalyses the reaction hydrogencarbonate + L-glutamine + 2 ATP + H2O = carbamoyl phosphate + L-glutamate + 2 ADP + phosphate + 2 H(+). The catalysed reaction is hydrogencarbonate + NH4(+) + 2 ATP = carbamoyl phosphate + 2 ADP + phosphate + 2 H(+). It participates in amino-acid biosynthesis; L-arginine biosynthesis; carbamoyl phosphate from bicarbonate: step 1/1. Functionally, large subunit of the arginine-specific carbamoyl phosphate synthase (CPSase). CPSase catalyzes the formation of carbamoyl phosphate from the ammonia moiety of glutamine, hydrogencarbonate, and phosphate donated by ATP, constituting the first step of 2 biosynthetic pathways, one leading to arginine and/or urea and the other to pyrimidine nucleotides. The large subunit (synthetase) binds the substrates ammonia (free or transferred from glutamine from the small subunit), hydrogencarbonate and ATP and carries out an ATP-coupled ligase reaction, activating hydrogencarbonate by forming carboxy phosphate which reacts with ammonia to form carbamoyl phosphate. This chain is Carbamoyl phosphate synthase arginine-specific large chain, chloroplastic (CARB), found in Oryza sativa subsp. japonica (Rice).